The sequence spans 429 residues: Serine hydroxymethyltransferase (429 aa).

Residues leucine 126 and 130–132 (GHL) each bind (6S)-5,6,7,8-tetrahydrofolate. Lysine 235 carries the post-translational modification N6-(pyridoxal phosphate)lysine. 359–361 (SPF) serves as a coordination point for (6S)-5,6,7,8-tetrahydrofolate.

The protein belongs to the SHMT family. Homodimer. Pyridoxal 5'-phosphate serves as cofactor.

The protein localises to the cytoplasm. It carries out the reaction (6R)-5,10-methylene-5,6,7,8-tetrahydrofolate + glycine + H2O = (6S)-5,6,7,8-tetrahydrofolate + L-serine. It participates in one-carbon metabolism; tetrahydrofolate interconversion. Its pathway is amino-acid biosynthesis; glycine biosynthesis; glycine from L-serine: step 1/1. In terms of biological role, catalyzes the reversible interconversion of serine and glycine with tetrahydrofolate (THF) serving as the one-carbon carrier. This reaction serves as the major source of one-carbon groups required for the biosynthesis of purines, thymidylate, methionine, and other important biomolecules. Also exhibits THF-independent aldolase activity toward beta-hydroxyamino acids, producing glycine and aldehydes, via a retro-aldol mechanism. In Synechococcus sp. (strain CC9902), this protein is Serine hydroxymethyltransferase.